We begin with the raw amino-acid sequence, 460 residues long: Photosystem II CP43 reaction center protein (460 aa).

Topologically, residues 1–35 (MVTLSNTSMVGGRDLPSTGFAWWSGNARLINLSGK) are cytoplasmic. A helical transmembrane segment spans residues 36 to 58 (LLGAHVAHAGLIVFWAGAMTLFE). At 59–98 (VAHFIPEKPMYEQGLILLPHIATLGWGVGPAGEVTDIFPF) the chain is on the lumenal, thylakoid side. A helical transmembrane segment spans residues 99–121 (FVVGVLHLISSAVLGLGGIYHAL). The Cytoplasmic portion of the chain corresponds to 122–142 (RGPEVLEEYSSFFGYDWKDKN). Residues 143–165 (QMTNIIGYHLILLGCGALLLVFK) form a helical membrane-spanning segment. Residues 166 to 220 (AMFFGGVYDTWAPGGGDVRVITNPTLNPAIIFGYLLKAPFGGEGWIISVNNMEDI) are Lumenal, thylakoid-facing. A helical membrane pass occupies residues 221 to 240 (IGGHIWIGLICISGGIWHIL). Topologically, residues 241–255 (TKPFGWARRALIWSG) are cytoplasmic. Residues 256-276 (EAYLSYSLGALSLMGFIASVF) traverse the membrane as a helical segment. The Lumenal, thylakoid segment spans residues 277–411 (VWFNNTAYPS…NSFNYVSPRA (135 aa)). [CaMn4O5] cluster is bound by residues Glu341 and Arg344. A helical membrane pass occupies residues 412–436 (WLATSHFVLGFFFLVGHLWHAGRAR). Topologically, residues 437 to 460 (AAAAGFEKGIDRETEPTLFMPDLD) are cytoplasmic.

Belongs to the PsbB/PsbC family. PsbC subfamily. As to quaternary structure, PSII is composed of 1 copy each of membrane proteins PsbA, PsbB, PsbC, PsbD, PsbE, PsbF, PsbH, PsbI, PsbJ, PsbK, PsbL, PsbM, PsbT, PsbX, PsbY, PsbZ, Psb30/Ycf12, peripheral proteins PsbO, CyanoQ (PsbQ), PsbU, PsbV and a large number of cofactors. It forms dimeric complexes. It depends on Binds multiple chlorophylls and provides some of the ligands for the Ca-4Mn-5O cluster of the oxygen-evolving complex. It may also provide a ligand for a Cl- that is required for oxygen evolution. PSII binds additional chlorophylls, carotenoids and specific lipids. as a cofactor.

The protein localises to the cellular thylakoid membrane. Functionally, one of the components of the core complex of photosystem II (PSII). PSII binds chlorophyll and helps catalyze the primary light-induced photochemical processes of PSII. PSII is a light-driven water:plastoquinone oxidoreductase, using light energy to abstract electrons from H(2)O, generating O(2) and a proton gradient subsequently used for ATP formation. Required for correct assembly of PSII. This chain is Photosystem II CP43 reaction center protein, found in Synechocystis sp. (strain ATCC 27184 / PCC 6803 / Kazusa).